We begin with the raw amino-acid sequence, 482 residues long: ATP synthase subunit beta (482 aa).

162–169 (GGAGVGKT) contributes to the ATP binding site.

F-type ATPases have 2 components, CF(1) - the catalytic core - and CF(0) - the membrane proton channel. CF(1) has five subunits: alpha(3), beta(3), gamma(1), delta(1), epsilon(1). CF(0) has four main subunits: a(1), b(1), b'(1) and c(9-12).

The protein localises to the cellular thylakoid membrane. It catalyses the reaction ATP + H2O + 4 H(+)(in) = ADP + phosphate + 5 H(+)(out). Inhibited by dicyclohexylcarbodiimide. Functionally, produces ATP from ADP in the presence of a proton gradient across the membrane. The catalytic sites are hosted primarily by the beta subunits. The complex from the organism is particularly stable to disruption and remains functional after 6 hrs at 55 degrees Celsius. This Thermosynechococcus vestitus (strain NIES-2133 / IAM M-273 / BP-1) protein is ATP synthase subunit beta.